Consider the following 939-residue polypeptide: Zinc finger RNA-binding protein 2 (939 aa).

Disordered stretches follow at residues 1-72 (MATS…AYGS), 116-185 (GRMT…IVTS), 217-264 (FYPP…PKAG), 289-314 (HLGG…SPRG), 360-389 (LEPA…ASSR), 401-449 (ALCE…DAQP), 545-590 (RLEE…SSDD), and 906-939 (RLGA…EGLV). Composition is skewed to polar residues over residues 137 to 147 (PHGSHSHAQPP) and 157 to 184 (QPAS…SIVT). The segment covering 217 to 239 (FYPPAQPPPPPGPPQQLPPPPAP) has biased composition (pro residues). Positions 516-549 (KVLEERMRKQRHLAEERLEQLRRWHAERRRLEEE) form a coiled coil. The 366-residue stretch at 570-935 (RPESPASAPL…GEKKRGRRGG (366 aa)) folds into the DZF domain. The span at 906–916 (RLGARFRKRQR) shows a compositional bias: basic residues.

This Homo sapiens (Human) protein is Zinc finger RNA-binding protein 2 (ZFR2).